The primary structure comprises 872 residues: Leucine--tRNA ligase (872 aa).

A 'HIGH' region motif is present at residues 42 to 52 (PYPSGSLHMGH). The short motif at 634–638 (TMSKS) is the 'KMSKS' region element. Lys637 lines the ATP pocket.

Belongs to the class-I aminoacyl-tRNA synthetase family.

The protein resides in the cytoplasm. It carries out the reaction tRNA(Leu) + L-leucine + ATP = L-leucyl-tRNA(Leu) + AMP + diphosphate. The protein is Leucine--tRNA ligase of Trichormus variabilis (strain ATCC 29413 / PCC 7937) (Anabaena variabilis).